Here is a 349-residue protein sequence, read N- to C-terminus: Ferredoxin--NADP reductase 1 (349 aa).

Residues Glu36, Lys44, Tyr48, Val88, Leu123, Asp290, and Ser331 each contribute to the FAD site.

This sequence belongs to the ferredoxin--NADP reductase type 2 family. In terms of assembly, homodimer. Requires FAD as cofactor.

It carries out the reaction 2 reduced [2Fe-2S]-[ferredoxin] + NADP(+) + H(+) = 2 oxidized [2Fe-2S]-[ferredoxin] + NADPH. The polypeptide is Ferredoxin--NADP reductase 1 (Lysinibacillus sphaericus (strain C3-41)).